Here is a 131-residue protein sequence, read N- to C-terminus: Profilin (131 aa).

The protein belongs to the profilin family. Occurs in many kinds of cells as a complex with monomeric actin in a 1:1 ratio.

The protein localises to the cytoplasm. It is found in the cytoskeleton. In terms of biological role, binds to actin and affects the structure of the cytoskeleton. At high concentrations, profilin prevents the polymerization of actin, whereas it enhances it at low concentrations. By binding to PIP2, it inhibits the formation of IP3 and DG. The sequence is that of Profilin from Cucumis melo (Muskmelon).